The following is a 91-amino-acid chain: Small ribosomal subunit protein bS20 (91 aa).

Residues 1-18 (MPLHKSAEKRLRQSEKRN) show a composition bias toward basic and acidic residues. The disordered stretch occupies residues 1 to 24 (MPLHKSAEKRLRQSEKRNVRNRAR).

It belongs to the bacterial ribosomal protein bS20 family.

In terms of biological role, binds directly to 16S ribosomal RNA. This chain is Small ribosomal subunit protein bS20, found in Chlorobium phaeobacteroides (strain DSM 266 / SMG 266 / 2430).